Consider the following 200-residue polypeptide: MELQVVGANALTVSETTFGREFNEALIHQVVVAYAAGARQGSRAQKTRAEVSGSGKKPWRQKGTGRARSGDIKSPIWRSGGVTFAAKPQDHSQKVNKKMYRGAIKSILSELVRQDRLIVVEKFEVEAPKTKVLVQKLKELALEDVLIITASLDENLFLAARNLYKVDVRDVQGIDPVSLIAFDKVVVTVDAVKQIEEMLA.

Residues 43–71 (RAQKTRAEVSGSGKKPWRQKGTGRARSGD) form a disordered region.

Belongs to the universal ribosomal protein uL4 family. In terms of assembly, part of the 50S ribosomal subunit.

One of the primary rRNA binding proteins, this protein initially binds near the 5'-end of the 23S rRNA. It is important during the early stages of 50S assembly. It makes multiple contacts with different domains of the 23S rRNA in the assembled 50S subunit and ribosome. Its function is as follows. Forms part of the polypeptide exit tunnel. The chain is Large ribosomal subunit protein uL4 from Pasteurella multocida (strain Pm70).